A 467-amino-acid chain; its full sequence is Stromal membrane-associated protein 1 (467 aa).

Positions 18 to 136 (QLILSKLLRE…KYYDKNAIAI (119 aa)) constitute an Arf-GAP domain. Residues 33–56 (CADCEAKGPRWASWNIGVFICIRC) form a C4-type zinc finger. The span at 145–155 (PLQPLVSSPSL) shows a compositional bias: polar residues. 2 disordered regions span residues 145-224 (PLQP…LDGP) and 408-467 (KFGL…QLWK). Basic and acidic residues-rich tracts occupy residues 160 to 185 (DKNKLEKEKEKKKEEKKREKEPEKPA) and 192 to 204 (KLQKKDQQLEPKK). The Interaction with clathrin heavy chains signature appears at 218–222 (LLGLD). Residues 413-438 (QAQQPQWSLSQMNQQMAGMSISSATP) are compositionally biased toward polar residues. Residues 446-467 (SSTTAGWSGSSSGQTLSTQLWK) show a composition bias toward low complexity.

As to quaternary structure, interacts with ARF6. Interacts with clathrin heavy chains via the clathrin box-like motif. In terms of tissue distribution, detected in bone marrow, adrenal gland, trachea, lymph node, spinal cord, peripheral blood leukocytes, thyroid and stomach.

Its subcellular location is the cell membrane. Functionally, GTPase activating protein that acts on ARF6. Plays a role in clathrin-dependent endocytosis. May play a role in erythropoiesis. In Homo sapiens (Human), this protein is Stromal membrane-associated protein 1 (SMAP1).